Here is a 387-residue protein sequence, read N- to C-terminus: Exodeoxyribonuclease 7 large subunit (387 aa).

It belongs to the XseA family. Heterooligomer composed of large and small subunits.

It localises to the cytoplasm. The catalysed reaction is Exonucleolytic cleavage in either 5'- to 3'- or 3'- to 5'-direction to yield nucleoside 5'-phosphates.. Functionally, bidirectionally degrades single-stranded DNA into large acid-insoluble oligonucleotides, which are then degraded further into small acid-soluble oligonucleotides. This is Exodeoxyribonuclease 7 large subunit from Campylobacter hominis (strain ATCC BAA-381 / DSM 21671 / CCUG 45161 / LMG 19568 / NCTC 13146 / CH001A).